A 537-amino-acid polypeptide reads, in one-letter code: Cytochrome P450 734A5 (537 aa).

A helical transmembrane segment spans residues 13–33; that stretch reads GAAAVAVAAAAAWVAVYAAAA. Cysteine 480 provides a ligand contact to heme.

This sequence belongs to the cytochrome P450 family. Requires heme as cofactor. Exclusively expressed in roots.

It is found in the membrane. Cytochrome P450 probably involved in brassinosteroids (BRs) inactivation and regulation of BRs homeostasis. This is Cytochrome P450 734A5 (CYP734A5) from Oryza sativa subsp. japonica (Rice).